The chain runs to 492 residues: 2-succinylbenzoate--CoA ligase (492 aa).

The protein belongs to the ATP-dependent AMP-binding enzyme family. MenE subfamily.

The enzyme catalyses 2-succinylbenzoate + ATP + CoA = 2-succinylbenzoyl-CoA + AMP + diphosphate. It functions in the pathway quinol/quinone metabolism; 1,4-dihydroxy-2-naphthoate biosynthesis; 1,4-dihydroxy-2-naphthoate from chorismate: step 5/7. The protein operates within quinol/quinone metabolism; menaquinone biosynthesis. In terms of biological role, converts 2-succinylbenzoate (OSB) to 2-succinylbenzoyl-CoA (OSB-CoA). The polypeptide is 2-succinylbenzoate--CoA ligase (Geobacillus sp. (strain WCH70)).